The primary structure comprises 527 residues: Bifunctional purine biosynthesis protein PurH (527 aa).

In terms of domain architecture, MGS-like spans Ala-8 to Val-156.

Belongs to the PurH family.

The enzyme catalyses (6R)-10-formyltetrahydrofolate + 5-amino-1-(5-phospho-beta-D-ribosyl)imidazole-4-carboxamide = 5-formamido-1-(5-phospho-D-ribosyl)imidazole-4-carboxamide + (6S)-5,6,7,8-tetrahydrofolate. It carries out the reaction IMP + H2O = 5-formamido-1-(5-phospho-D-ribosyl)imidazole-4-carboxamide. It functions in the pathway purine metabolism; IMP biosynthesis via de novo pathway; 5-formamido-1-(5-phospho-D-ribosyl)imidazole-4-carboxamide from 5-amino-1-(5-phospho-D-ribosyl)imidazole-4-carboxamide (10-formyl THF route): step 1/1. The protein operates within purine metabolism; IMP biosynthesis via de novo pathway; IMP from 5-formamido-1-(5-phospho-D-ribosyl)imidazole-4-carboxamide: step 1/1. The polypeptide is Bifunctional purine biosynthesis protein PurH (Mycobacterium sp. (strain JLS)).